A 398-amino-acid chain; its full sequence is Cytochrome b (398 aa).

A helical transmembrane segment spans residues Leu45–Met65. Heme b-binding residues include His95 and His109. 8 consecutive transmembrane segments (helical) span residues Val97–Gly117, Ile129–Trp149, Phe164–Val184, Phe192–Leu212, Phe245–Tyr265, Leu304–Asp324, Pro335–Gly355, and Ile364–Leu384. The heme b site is built by His196 and His210.

It belongs to the cytochrome b family. The main subunits of complex b-c1 are: cytochrome b, cytochrome c1 and the Rieske protein. It depends on heme b as a cofactor.

The protein resides in the cell membrane. In terms of biological role, component of the ubiquinol-cytochrome c reductase complex (complex III or cytochrome b-c1 complex), which is a respiratory chain that generates an electrochemical potential coupled to ATP synthesis. The protein is Cytochrome b (petB) of Rickettsia typhi (strain ATCC VR-144 / Wilmington).